The following is a 172-amino-acid chain: Iron-sulfur cluster assembly protein SufA (172 aa).

An N-terminal signal peptide occupies residues 1-19 (MFINIFLFLFAATINISSS). Positions 96, 164, and 166 each coordinate [4Fe-4S] cluster.

It belongs to the HesB/IscA family. In terms of assembly, homodimer.

It localises to the plastid. The protein resides in the apicoplast. It participates in cofactor biosynthesis; iron-sulfur cluster biosynthesis. In terms of biological role, participates in the sulfur mobilization (SUF) pathway for iron-sulfur (Fe-S) cluster biogenesis. Involved in the pre-assembly of [4Fe-4S] clusters and their transfer to target proteins. The chain is Iron-sulfur cluster assembly protein SufA from Plasmodium berghei (strain Anka).